Reading from the N-terminus, the 466-residue chain is Soluble pyridine nucleotide transhydrogenase (466 aa).

Glutamate 36–cysteine 45 serves as a coordination point for FAD.

The protein belongs to the class-I pyridine nucleotide-disulfide oxidoreductase family. Homooligomer; probable homooctamer. Requires FAD as cofactor.

The protein localises to the cytoplasm. The catalysed reaction is NAD(+) + NADPH = NADH + NADP(+). In terms of biological role, conversion of NADPH, generated by peripheral catabolic pathways, to NADH, which can enter the respiratory chain for energy generation. The chain is Soluble pyridine nucleotide transhydrogenase from Escherichia coli O6:H1 (strain CFT073 / ATCC 700928 / UPEC).